Here is a 343-residue protein sequence, read N- to C-terminus: Cell cycle control protein 50C (343 aa).

The Cytoplasmic segment spans residues 1 to 34 (MKRKCQDYESRLPDNTAVKQQQLPAFRLQLTASE). Residues 35-55 (ILSGFFAIGLFCLGMGIILLL) form a helical membrane-spanning segment. At 56–306 (SAKSIKEVEI…STLTWSGGSS (251 aa)) the chain is on the extracellular side. N-linked (GlcNAc...) asparagine glycans are attached at residues Asn66, Asn164, Asn205, and Asn265. Residues 307–327 (LFLALAYLVTGAVTLLASFSM) traverse the membrane as a helical segment. The Cytoplasmic portion of the chain corresponds to 328–343 (MALHLKLKERKTFFLQ).

Belongs to the CDC50/LEM3 family.

It localises to the membrane. The polypeptide is Cell cycle control protein 50C (TMEM30C) (Bos taurus (Bovine)).